A 395-amino-acid polypeptide reads, in one-letter code: Putative nickel insertion protein (395 aa).

The protein belongs to the LarC family.

The protein is Putative nickel insertion protein of Archaeoglobus fulgidus (strain ATCC 49558 / DSM 4304 / JCM 9628 / NBRC 100126 / VC-16).